The primary structure comprises 531 residues: Ultra-long-chain fatty acid omega-hydroxylase (531 aa).

The Lumenal segment spans residues 1 to 22; it reads MLPITDRLLHLLGLEKTAFRIY. The chain crosses the membrane as a helical span at residues 23–43; the sequence is AVSTLLLFLLFFLFRLLLRFL. Residues 44-531 lie on the Cytoplasmic side of the membrane; that stretch reads RLCRSFYITC…LKVEPLPPRA (488 aa). 2 residues coordinate heme: Glu-335 and Cys-475.

Belongs to the cytochrome P450 family. The cofactor is heme.

It is found in the endoplasmic reticulum membrane. Its subcellular location is the microsome membrane. The enzyme catalyses triacontanoate + reduced [NADPH--hemoprotein reductase] + O2 = omega-hydroxy-triacontanoate + oxidized [NADPH--hemoprotein reductase] + H2O + H(+). It carries out the reaction an omega-methyl-ultra-long-chain fatty acid + reduced [NADPH--hemoprotein reductase] + O2 = an omega-hydroxy-ultra-long-chain fatty acid + oxidized [NADPH--hemoprotein reductase] + H2O + H(+). A cytochrome P450 monooxygenase involved in epidermal ceramide biosynthesis. Hydroxylates the terminal carbon (omega-hydroxylation) of ultra-long-chain fatty acyls (C28-C36) prior to ceramide synthesis. Contributes to the synthesis of three classes of omega-hydroxy-ultra-long chain fatty acylceramides having sphingosine, 6-hydroxysphingosine and phytosphingosine bases, all major lipid components that underlie the permeability barrier of the stratum corneum. Mechanistically, uses molecular oxygen inserting one oxygen atom into a substrate, and reducing the second into a water molecule, with two electrons provided by NADPH via cytochrome P450 reductase (CPR; NADPH-ferrihemoprotein reductase). The sequence is that of Ultra-long-chain fatty acid omega-hydroxylase from Homo sapiens (Human).